The primary structure comprises 200 residues: Shikimate kinase (200 aa).

33-38 (GAGKST) is an ATP binding site. Ser-37 lines the Mg(2+) pocket. Residues Asp-55, Arg-79, and Gly-101 each contribute to the substrate site. Arg-139 provides a ligand contact to ATP. Substrate is bound at residue Arg-158.

Belongs to the shikimate kinase family. In terms of assembly, monomer. Requires Mg(2+) as cofactor.

The protein localises to the cytoplasm. The catalysed reaction is shikimate + ATP = 3-phosphoshikimate + ADP + H(+). It participates in metabolic intermediate biosynthesis; chorismate biosynthesis; chorismate from D-erythrose 4-phosphate and phosphoenolpyruvate: step 5/7. Its function is as follows. Catalyzes the specific phosphorylation of the 3-hydroxyl group of shikimic acid using ATP as a cosubstrate. The chain is Shikimate kinase from Brucella abortus (strain S19).